The primary structure comprises 728 residues: MSESGEMSEFGYIMELIAKGKVTIKNIERELICPACKELFTHPLILPCQHSICHKCVKELLLTLDDSFNDVGSDNSNQSSPRLRLPSPSMDKIDRINRPGWKRNSLTPRTTVFPCPGCEHDVDLGERGINGLFRNFTLETIVERYRQAARAATAIMCDLCKPPPQESTKSCMDCSASYCNECFKIHHPWGTIKAQHEYVGPTTNFRPKILMCPEHETERINMYCELCRRPVCHLCKLGGNHANHRVTTMSSAYKTLKEKLSKDIDYLIGKESQVKSQISELNLLMKETECNGERAKEEAITHFEKLFEVLEERKSSVLKAIDSSKKLRLDKFQTQMEEYQGLLENNGLVGYAQEVLKETDQSCFVQTAKQLHLRIQKATESLKSFRPAAQTSFEDYVVNTSKQTELLGELSFFSSGIDVPEINEEQSKVYNNALINWHHPEKDKADSYVLEYRKINRDDEMSWNEIEVCGTSKIIQDLENSSTYAFRVRAYKGSICSPCSRELILHTPPAPVFSFLFDEKCGYNNEHLLLNLKRDRVESRAGFNLLLAAERIQVGYYTSLDYIIGDTGITKGKHFWAFRVEPYSYLVKVGVASSDKLQEWLRSPRDAVSPRYEQDSGHDSGSEDACFDSSQPFTLVTIGMQKFFIPKSPTSSNEPENRVLPMPTSIGIFLDCDKGKVDFYDMDQMKCLYERQVDCSHTLYPAFALMGSGGIQLEEPITAKYLEYQEDM.

The RING-type; degenerate zinc-finger motif lies at 33–84; the sequence is CPACKELFTHPLILPCQHSICHKCVKELLLTLDDSFNDVGSDNSNQSSPRLR. 2 consecutive B box-type zinc fingers follow at residues 154–192 and 207–249; these read AIMC…WGTI and PKIL…VTTM. Positions 212, 215, 235, and 241 each coordinate Zn(2+). Residues 271–345 adopt a coiled-coil conformation; that stretch reads ESQVKSQISE…MEEYQGLLEN (75 aa). One can recognise a COS domain in the interval 356–413; that stretch reads LKETDQSCFVQTAKQLHLRIQKATESLKSFRPAAQTSFEDYVVNTSKQTELLGELSFF. A Fibronectin type-III domain is found at 419 to 510; it reads VPEINEEQSK…RELILHTPPA (92 aa). The 213-residue stretch at 508–720 folds into the B30.2/SPRY domain; that stretch reads PPAPVFSFLF…IQLEEPITAK (213 aa).

It belongs to the TRIM/RBCC family. Interacts with CENPH. As to expression, highly expressed in testis, prostate and brain. Weakly expressed in kidney, lung and heart. Expressed in fetal tissues.

It localises to the cytoplasm. The protein resides in the cytoplasmic vesicle. Its subcellular location is the secretory vesicle. It is found in the acrosome. The protein localises to the cytoskeleton. It catalyses the reaction S-ubiquitinyl-[E2 ubiquitin-conjugating enzyme]-L-cysteine + [acceptor protein]-L-lysine = [E2 ubiquitin-conjugating enzyme]-L-cysteine + N(6)-ubiquitinyl-[acceptor protein]-L-lysine.. In terms of biological role, E3 ubiquitin-protein ligase which mediates ubiquitination and subsequent proteasomal degradation of target proteins. Involved in chromosome segregation and cell cycle regulation. May play a role in the acrosome reaction and fertilization. This Homo sapiens (Human) protein is E3 ubiquitin-protein ligase TRIM36 (TRIM36).